We begin with the raw amino-acid sequence, 237 residues long: Phosphoribosylaminoimidazole-succinocarboxamide synthase (237 aa).

It belongs to the SAICAR synthetase family.

It catalyses the reaction 5-amino-1-(5-phospho-D-ribosyl)imidazole-4-carboxylate + L-aspartate + ATP = (2S)-2-[5-amino-1-(5-phospho-beta-D-ribosyl)imidazole-4-carboxamido]succinate + ADP + phosphate + 2 H(+). It functions in the pathway purine metabolism; IMP biosynthesis via de novo pathway; 5-amino-1-(5-phospho-D-ribosyl)imidazole-4-carboxamide from 5-amino-1-(5-phospho-D-ribosyl)imidazole-4-carboxylate: step 1/2. This Listeria innocua serovar 6a (strain ATCC BAA-680 / CLIP 11262) protein is Phosphoribosylaminoimidazole-succinocarboxamide synthase.